The chain runs to 457 residues: tRNA modification GTPase MnmE (457 aa).

Residues Arg-22, Glu-83, and Arg-122 each contribute to the (6S)-5-formyl-5,6,7,8-tetrahydrofolate site. The TrmE-type G domain occupies 219–378 (GLATAIIGRP…LEEAIKTLFF (160 aa)). Asn-229 contacts K(+). Residues 229-234 (NVGKSS), 248-254 (TDIAGTT), and 273-276 (DTAG) contribute to the GTP site. Ser-233 lines the Mg(2+) pocket. Residues Thr-248, Ile-250, and Thr-253 each coordinate K(+). Thr-254 is a binding site for Mg(2+). (6S)-5-formyl-5,6,7,8-tetrahydrofolate is bound at residue Lys-457.

It belongs to the TRAFAC class TrmE-Era-EngA-EngB-Septin-like GTPase superfamily. TrmE GTPase family. Homodimer. Heterotetramer of two MnmE and two MnmG subunits. Requires K(+) as cofactor.

Its subcellular location is the cytoplasm. Functionally, exhibits a very high intrinsic GTPase hydrolysis rate. Involved in the addition of a carboxymethylaminomethyl (cmnm) group at the wobble position (U34) of certain tRNAs, forming tRNA-cmnm(5)s(2)U34. This is tRNA modification GTPase MnmE from Listeria welshimeri serovar 6b (strain ATCC 35897 / DSM 20650 / CCUG 15529 / CIP 8149 / NCTC 11857 / SLCC 5334 / V8).